The chain runs to 238 residues: Peptidyl-tRNA hydrolase (238 aa).

Tyr-14 provides a ligand contact to tRNA. The active-site Proton acceptor is His-19. Phe-64, Asn-66, and Asn-112 together coordinate tRNA. The span at 190-202 shows a compositional bias: basic and acidic residues; that stretch reads KTEEPAPKPEKKT. A disordered region spans residues 190–225; sequence KTEEPAPKPEKKTVAKSHIHQARNHNQPRMPESGPM. The span at 203–212 shows a compositional bias: basic residues; that stretch reads VAKSHIHQAR.

The protein belongs to the PTH family. Monomer.

Its subcellular location is the cytoplasm. The catalysed reaction is an N-acyl-L-alpha-aminoacyl-tRNA + H2O = an N-acyl-L-amino acid + a tRNA + H(+). Hydrolyzes ribosome-free peptidyl-tRNAs (with 1 or more amino acids incorporated), which drop off the ribosome during protein synthesis, or as a result of ribosome stalling. Functionally, catalyzes the release of premature peptidyl moieties from peptidyl-tRNA molecules trapped in stalled 50S ribosomal subunits, and thus maintains levels of free tRNAs and 50S ribosomes. The polypeptide is Peptidyl-tRNA hydrolase (Rhizobium rhizogenes (strain K84 / ATCC BAA-868) (Agrobacterium radiobacter)).